A 679-amino-acid polypeptide reads, in one-letter code: Sodium-dependent phosphate transporter 1 (679 aa).

6 consecutive transmembrane segments (helical) span residues 21 to 41 (YLWMLILGFIIAFVLAFSVGA), 62 to 82 (ACILASIFETVGSVLLGAKVS), 100 to 120 (GLLMAGSVSAMFGSAVWQLVA), 158 to 178 (IVMSWFVSPLLSGIMSGILFF), 203 to 223 (ACTVGINLFSIMYTGAPLLGF), and 230 to 250 (GTILISVGCAVFCALIVWFFV). Phosphoserine occurs at positions 265 and 269. The interval 268–288 (ESPLMEKKNSLKEDHEETKLS) is disordered. Positions 271–286 (LMEKKNSLKEDHEETK) are enriched in basic and acidic residues. 4 consecutive transmembrane segments (helical) span residues 511-531 (VSLLFQFLQILTACFGSFAHG), 558-578 (VATPIWLLLYGGVGICIGLWV), 600-620 (FSIELASALTVVIASNIGLPI), and 650-670 (IFMAWFVTVPISGVISAAIMA). The a stretch occupies residues 550–558 (DTGDVSSKV).

It belongs to the inorganic phosphate transporter (PiT) (TC 2.A.20) family.

The protein localises to the cell membrane. It catalyses the reaction 2 Na(+)(out) + phosphate(out) = 2 Na(+)(in) + phosphate(in). In terms of biological role, sodium-phosphate symporter which preferentially transports the monovalent form of phosphate with a stoichiometry of two sodium ions per phosphate ion. May play a role in extracellular matrix and cartilage calcification as well as in vascular calcification. Essential for cell proliferation but this function is independent of its phosphate transporter activity. In Pongo abelii (Sumatran orangutan), this protein is Sodium-dependent phosphate transporter 1 (SLC20A1).